The sequence spans 293 residues: Beta-porphyranase B (293 aa).

Residues 1-21 (MKLSNQFLITITLLITSITFA) form the signal peptide. In terms of domain architecture, GH16 spans 38–291 (QEWKLIENMS…WVRSWQLVDS (254 aa)). The substrate site is built by Trp-67, Arg-70, Glu-156, Glu-161, and Glu-256. The Nucleophile role is filled by Glu-156. Glu-161 serves as the catalytic Proton donor.

Belongs to the glycosyl hydrolase 16 family.

It localises to the periplasm. It catalyses the reaction Hydrolysis of beta-D-galactopyranose-(1-&gt;4)-alpha-L-galactopyranose-6-sulfate linkages in porphyran.. Functionally, cleaves the sulfated polysaccharide porphyran at the (1-&gt;4) linkages between beta-D-galactopyranose and alpha-L-galactopyranose-6-sulfate, forming mostly the disaccharide alpha-L-galactopyranose-6-sulfate-(1-&gt;3)-beta-D-galactose. Some longer oligosaccharides of even number of residues are also observed. Inactive on the non-sulfated agarose portion of the porphyran backbone. In contrast to PorA, tolerates the presence of 3-6-anhydro-L-galactose in subsite -2. In Zobellia galactanivorans (strain DSM 12802 / CCUG 47099 / CIP 106680 / NCIMB 13871 / Dsij), this protein is Beta-porphyranase B (porB).